Reading from the N-terminus, the 35-residue chain is Photosystem II reaction center protein T (35 aa).

A helical membrane pass occupies residues 3-23 (ALVYTFLLVSTLGIIFFAIFF).

It belongs to the PsbT family. As to quaternary structure, PSII is composed of 1 copy each of membrane proteins PsbA, PsbB, PsbC, PsbD, PsbE, PsbF, PsbH, PsbI, PsbJ, PsbK, PsbL, PsbM, PsbT, PsbY, PsbZ, Psb30/Ycf12, at least 3 peripheral proteins of the oxygen-evolving complex and a large number of cofactors. It forms dimeric complexes.

Its subcellular location is the plastid. It localises to the chloroplast thylakoid membrane. Found at the monomer-monomer interface of the photosystem II (PS II) dimer, plays a role in assembly and dimerization of PSII. PSII is a light-driven water plastoquinone oxidoreductase, using light energy to abstract electrons from H(2)O, generating a proton gradient subsequently used for ATP formation. This chain is Photosystem II reaction center protein T, found in Metasequoia glyptostroboides (Dawn redwood).